The sequence spans 230 residues: Phosphoribosylaminoimidazole-succinocarboxamide synthase (230 aa).

The protein belongs to the SAICAR synthetase family.

It catalyses the reaction 5-amino-1-(5-phospho-D-ribosyl)imidazole-4-carboxylate + L-aspartate + ATP = (2S)-2-[5-amino-1-(5-phospho-beta-D-ribosyl)imidazole-4-carboxamido]succinate + ADP + phosphate + 2 H(+). The protein operates within purine metabolism; IMP biosynthesis via de novo pathway; 5-amino-1-(5-phospho-D-ribosyl)imidazole-4-carboxamide from 5-amino-1-(5-phospho-D-ribosyl)imidazole-4-carboxylate: step 1/2. The protein is Phosphoribosylaminoimidazole-succinocarboxamide synthase of Thermotoga petrophila (strain ATCC BAA-488 / DSM 13995 / JCM 10881 / RKU-1).